A 971-amino-acid chain; its full sequence is Exportin-2 (971 aa).

Position 1 is an N-acetylmethionine (M1). The region spanning 29 to 102 is the Importin N-terminal domain; the sequence is AEKFLESVEG…KANIVHLMLS (74 aa). S112 is subject to Phosphoserine. N6-acetyllysine occurs at positions 574 and 824. S931 bears the Phosphoserine mark.

This sequence belongs to the XPO2/CSE1 family. In terms of assembly, found in a complex with CSE1L/XPO2, Ran and KPNA2. Binds with high affinity to importin-alpha only in the presence of RanGTP. The complex is dissociated by the combined action of RanBP1 and RanGAP1. Interacts with CFTR.

The protein resides in the cytoplasm. It localises to the nucleus. Export receptor for importin-alpha. Mediates importin-alpha re-export from the nucleus to the cytoplasm after import substrates (cargos) have been released into the nucleoplasm. In the nucleus binds cooperatively to importin-alpha and to the GTPase Ran in its active GTP-bound form. Docking of this trimeric complex to the nuclear pore complex (NPC) is mediated through binding to nucleoporins. Upon transit of a nuclear export complex into the cytoplasm, disassembling of the complex and hydrolysis of Ran-GTP to Ran-GDP (induced by RANBP1 and RANGAP1, respectively) cause release of the importin-alpha from the export receptor. CSE1L/XPO2 then return to the nuclear compartment and mediate another round of transport. The directionality of nuclear export is thought to be conferred by an asymmetric distribution of the GTP- and GDP-bound forms of Ran between the cytoplasm and nucleus. This chain is Exportin-2 (CSE1L), found in Pongo abelii (Sumatran orangutan).